We begin with the raw amino-acid sequence, 348 residues long: Dihydroorotase (348 aa).

H17 and H19 together coordinate Zn(2+). Substrate-binding positions include 19-21 (HLR) and N45. Zn(2+) contacts are provided by K103, H140, and H178. K103 bears the N6-carboxylysine mark. Residue H140 coordinates substrate. L223 contacts substrate. D251 is a Zn(2+) binding site. Residue D251 is part of the active site. Substrate is bound by residues H255 and A267.

Belongs to the metallo-dependent hydrolases superfamily. DHOase family. Class II DHOase subfamily. Homodimer. It depends on Zn(2+) as a cofactor.

It catalyses the reaction (S)-dihydroorotate + H2O = N-carbamoyl-L-aspartate + H(+). It functions in the pathway pyrimidine metabolism; UMP biosynthesis via de novo pathway; (S)-dihydroorotate from bicarbonate: step 3/3. In terms of biological role, catalyzes the reversible cyclization of carbamoyl aspartate to dihydroorotate. In Shigella flexneri serotype 5b (strain 8401), this protein is Dihydroorotase.